The following is a 332-amino-acid chain: Cell division protein ZipA (332 aa).

Residues 1–6 are Periplasmic-facing; it reads MMQDLR. The chain crosses the membrane as a helical span at residues 7-27; sequence LILIVVGAIAIIALLLHGLWT. The Cytoplasmic segment spans residues 28-332; the sequence is SRKERSSLFR…RLREVLENNA (305 aa). 2 stretches are compositionally biased toward basic and acidic residues: residues 34-51 and 61-72; these read SLFRDRPAKRSKKEREQS and GEVRVRSAHPED. Residues 34-184 form a disordered region; that stretch reads SLFRDRPAKR…PAVAHEPQPA (151 aa). Residues 98-107 show a composition bias toward low complexity; that stretch reads PAPRAVQPAA. Residues 121-136 show a composition bias toward acidic residues; that stretch reads DDILLDNYAQEEDDEP. Residues 155 to 171 are compositionally biased toward low complexity; the sequence is PAAEPAFHAEPAHQPQP.

This sequence belongs to the ZipA family. As to quaternary structure, interacts with FtsZ via their C-terminal domains.

The protein resides in the cell inner membrane. Functionally, essential cell division protein that stabilizes the FtsZ protofilaments by cross-linking them and that serves as a cytoplasmic membrane anchor for the Z ring. Also required for the recruitment to the septal ring of downstream cell division proteins. This is Cell division protein ZipA from Serratia proteamaculans (strain 568).